The primary structure comprises 117 residues: DNA-binding protein RdgB (117 aa).

Residues 82 to 102 constitute a DNA-binding region (H-T-H motif); sequence NHSALAKKYNVSLQWIYKIVR.

This sequence belongs to the c/mor transcriptional regulatory family.

Functionally, regulates pectin lyase production in response to DNA damage. This Pectobacterium carotovorum subsp. carotovorum (Erwinia carotovora subsp. carotovora) protein is DNA-binding protein RdgB (rdgB).